We begin with the raw amino-acid sequence, 733 residues long: Zinc finger transcription factor ace1 (733 aa).

Basic residues predominate over residues 1–11 (MSFSNPRRRTP). 3 disordered regions span residues 1–22 (MSFS…CEHG), 34–63 (GATF…SQSA), and 89–183 (ASLS…SSTT). The span at 39–49 (SPTSPSASSAA) shows a compositional bias: low complexity. The segment covering 132–142 (LRPRSVRRTRN) has biased composition (basic residues). The span at 148–158 (GIGSSVVSTND) shows a compositional bias: polar residues. Positions 171–183 (ASALTRSAASSTT) are enriched in low complexity. 3 consecutive C2H2-type zinc fingers follow at residues 400–424 (KKCR…EKTH), 428–456 (WKCP…NDKH), and 463–488 (YECL…EKAH). The tract at residues 497-533 (TNGKKAPSQNGSTAQQTPPLANVSTPSSTPSYSVPTP) is disordered. The segment covering 503 to 515 (PSQNGSTAQQTPP) has biased composition (polar residues). Residues 519 to 530 (VSTPSSTPSYSV) show a composition bias toward low complexity.

It is found in the nucleus. Binds to the promoter of the cbh1 gene and activates transcription. The protein is Zinc finger transcription factor ace1 (ace1) of Hypocrea jecorina (Trichoderma reesei).